Here is a 224-residue protein sequence, read N- to C-terminus: UPF0758 protein PFL_6051 (224 aa).

The region spanning 102-224 is the MPN domain; that stretch reads ALENPLVVRD…PLSMAEYGWI (123 aa). 3 residues coordinate Zn(2+): His173, His175, and Asp186. The JAMM motif motif lies at 173–186; the sequence is HNHPSGICEPSPAD.

This sequence belongs to the UPF0758 family.

In Pseudomonas fluorescens (strain ATCC BAA-477 / NRRL B-23932 / Pf-5), this protein is UPF0758 protein PFL_6051.